Reading from the N-terminus, the 443-residue chain is 23S rRNA (uracil(1939)-C(5))-methyltransferase RlmD (443 aa).

The TRAM domain occupies 4–66 (QNRFDRTSFQ…RHFDEARVVE (63 aa)). Positions 79, 85, 88, and 167 each coordinate [4Fe-4S] cluster. Gln-275, Phe-304, Asn-309, Glu-325, Asp-352, and Asp-373 together coordinate S-adenosyl-L-methionine. Cys-399 functions as the Nucleophile in the catalytic mechanism.

Belongs to the class I-like SAM-binding methyltransferase superfamily. RNA M5U methyltransferase family. RlmD subfamily.

It carries out the reaction uridine(1939) in 23S rRNA + S-adenosyl-L-methionine = 5-methyluridine(1939) in 23S rRNA + S-adenosyl-L-homocysteine + H(+). Its function is as follows. Catalyzes the formation of 5-methyl-uridine at position 1939 (m5U1939) in 23S rRNA. This is 23S rRNA (uracil(1939)-C(5))-methyltransferase RlmD from Xylella fastidiosa (strain 9a5c).